Reading from the N-terminus, the 265-residue chain is Undecaprenyl-diphosphatase (265 aa).

The next 7 helical transmembrane spans lie at 38–58 (SDMF…IIYW), 80–100 (LIVA…LGFE), 107–127 (PIAW…WAAA), 135–155 (ITWL…VFPG), 175–195 (AAAT…ASGY), 213–233 (ALAI…KWLL), and 244–264 (FAIY…SGLI).

This sequence belongs to the UppP family.

The protein localises to the cell inner membrane. It carries out the reaction di-trans,octa-cis-undecaprenyl diphosphate + H2O = di-trans,octa-cis-undecaprenyl phosphate + phosphate + H(+). Functionally, catalyzes the dephosphorylation of undecaprenyl diphosphate (UPP). Confers resistance to bacitracin. The polypeptide is Undecaprenyl-diphosphatase (Rhizobium etli (strain CIAT 652)).